The primary structure comprises 448 residues: Beclin-1 (448 aa).

M1 carries the N-acetylmethionine modification. Phosphoserine is present on residues S14 and S29. 3 positions are modified to phosphoserine; by AMPK: S88, S91, and S94. A BH3 motif is present at residues 106–125; it reads TMENLSRRLKVTGDLFDIMS. Residues 110–157 are interaction with BCL2 and BCL2L1; the sequence is LSRRLKVTGDLFDIMSGQTDVDHPLCEECTDTLLDQLDTQLNVTENEC. T117 carries the post-translational modification Phosphothreonine; by DAPK1. The stretch at 140-267 forms a coiled coil; it reads DTLLDQLDTQ…QLDKLKKTNV (128 aa). An evolutionary conserved domain (ECD) region spans residues 243–448; that stretch reads DELKSVENQM…AWVSSQFYNK (206 aa). Residues K400 and K435 each participate in a glycyl lysine isopeptide (Lys-Gly) (interchain with G-Cter in ubiquitin) cross-link. A required for membrane-association region spans residues 423–448; sequence WTKALKFMLTNLKWGLAWVSSQFYNK.

This sequence belongs to the beclin family. A homodimeric form is proposed to exist; this metastable form readily transits to ATG14- or UVRAG-containing complexes with BECN1:UVRAG being more stable than BECN1:ATG14. Component of the PI3K (PI3KC3/PI3K-III/class III phosphatidylinositol 3-kinase) complex the core of which is composed of the catalytic subunit PIK3C3, the regulatory subunit PIK3R4 and BECN1 associating with additional regulatory/auxiliary subunits to form alternative complex forms. Alternative complex forms containing a fourth regulatory subunit in a mutually exclusive manner are PI3K complex I (PI3KC3-C1) containing ATG14, and PI3K complex II (PI3KC3-C2) containing UVRAG. PI3KC3-C1 displays a V-shaped architecture with PIK3R4 serving as a bridge between PIK3C3 and the ATG14:BECN1 subcomplex. Both, PI3KC3-C1 and PI3KC3-C2, can associate with further regulatory subunits, such as RUBCN, SH3GLB1/Bif-1 and AMBRA1. PI3KC3-C1 probably associates with PIK3CB. Forms a complex with PPP2CA and AMBRA1; AMBRA1 and BECN1 components of the complex regulate MYC stability via different pathways. Component of the complex, at least composed of LRPPRC, BECN1 and BCL2; the interactions prevent BECN1 from forming an autophagy-inducing complex with PIK3C3. Interacts with AMBRA1, GOPC, GRID2. Interacts with BCL2 and BCL2L1 isoform Bcl-X(L); the interaction inhibits BECN1 function in promoting autophagy by interfering with the formation of the PI3K complex. Interacts with cytosolic HMGB1; inhibits the interaction of BECN1 and BCL2 leading to promotion of autophagy. Interacts with USP10, USP13, VMP1, DAPK1, RAB39A. Interacts with the poly-Gln domain of ATXN3; the interaction causes deubiquitination at Lys-400 and stabilizes BECN1. Interacts with SLAMF1. Interacts with TRIM5; the interaction causes activation of BECN1 by causing its dissociation from its inhibitors BCL2 and TAB2. Interacts with active ULK1 (phosphorylated on 'Ser-317') and MEFV simultaneously. Interacts with WDR81 and WDR91; negatively regulates the PI3 kinase/PI3K activity associated with endosomal membranes. Interacts with LAPTM4B; competes with EGFR for LAPTM4B binding; regulates EGFR activity. Interacts with TRIM50. Interacts with TRIM16. Interacts with ATG14; this interaction is increased in the absence of TMEM39A. Interacts with WASHC1; preventing interaction with AMBRA1 and the DCX(AMBRA1) complex and subsequent ubiquitination. Interacts with TRIM17. Interacts with BCL2L10/BCL-B (via BH1 domain). Interacts with SH3BGRL. Interacts with IRGM; enhancing BECN1-interacting partners and influencing the composition of the BECN1 complex. Interacts with ARMC3. Interacts with LRPPRC. In terms of assembly, (Microbial infection) Interacts with African swine fever virus (ASFV) apoptosis regulator Bcl-2 homolog; this interaction allows the virus to inhibit BECN1, and thus autophagy. Post-translationally, phosphorylation at Thr-117 by DAPK1 reduces its interaction with BCL2 and BCL2L1 and promotes induction of autophagy. In response to autophagic stimuli, phosphorylated at serine residues by AMPK in an ATG14-dependent manner, and this phosphorylation is critical for maximally efficient autophagy. Polyubiquitinated by NEDD4, both with 'Lys-11'- and 'Lys-63'-linkages. 'Lys-11'-linked polyubiquitination leads to degradation and is enhanced when the stabilizing interaction partner VPS34 is depleted. Deubiquitinated by USP10 and USP13, leading to stabilize the PIK3C3/VPS34-containing complexes. Polyubiquitinated at Lys-400 with 'Lys-48'-linkages. 'Lys-48'-linked polyubiquitination of Lys-400 leads to degradation. Deubiquitinated by ATXN3, leading to stabilization. Ubiquitinated at Lys-435 via 'Lys-63'-linkage by the DCX(AMBRA1) complex, thereby increasing the association between BECN1 and PIK3C3 to promote PIK3C3 activity. 'Lys-48'-linked ubiquitination by RNF216 leads to proteasomal degradation and autophagy inhibition. In terms of processing, proteolytically processed by caspases including CASP8 and CASP3; the C-terminal fragments lack autophagy-inducing capacity and are proposed to induce apoptosis. Thus the cleavage is proposed to be an determinant to switch from autophagy to apoptosis pathways affecting cellular homeostasis including viral infections and survival of tumor cells.

The protein resides in the cytoplasm. It is found in the golgi apparatus. It localises to the trans-Golgi network membrane. The protein localises to the endosome membrane. Its subcellular location is the endoplasmic reticulum membrane. The protein resides in the mitochondrion membrane. It is found in the cytoplasmic vesicle. It localises to the autophagosome. The protein localises to the mitochondrion. Its subcellular location is the nucleus. Functionally, plays a central role in autophagy. Acts as a core subunit of the PI3K complex that mediates formation of phosphatidylinositol 3-phosphate; different complex forms are believed to play a role in multiple membrane trafficking pathways: PI3KC3-C1 is involved in initiation of autophagosomes and PI3KC3-C2 in maturation of autophagosomes and endocytosis. Involved in regulation of degradative endocytic trafficking and required for the abscission step in cytokinesis, probably in the context of PI3KC3-C2. Essential for the formation of PI3KC3-C2 but not PI3KC3-C1 PI3K complex forms. Involved in endocytosis. May play a role in antiviral host defense. Beclin-1-C 35 kDa localized to mitochondria can promote apoptosis; it induces the mitochondrial translocation of BAX and the release of proapoptotic factors. This chain is Beclin-1 (BECN1), found in Sus scrofa (Pig).